Reading from the N-terminus, the 204-residue chain is Peptide deformylase (204 aa).

Positions 131 and 174 each coordinate Fe cation. Residue Glu-175 is part of the active site. His-178 contacts Fe cation.

It belongs to the polypeptide deformylase family. It depends on Fe(2+) as a cofactor.

It catalyses the reaction N-terminal N-formyl-L-methionyl-[peptide] + H2O = N-terminal L-methionyl-[peptide] + formate. Functionally, removes the formyl group from the N-terminal Met of newly synthesized proteins. Requires at least a dipeptide for an efficient rate of reaction. N-terminal L-methionine is a prerequisite for activity but the enzyme has broad specificity at other positions. The polypeptide is Peptide deformylase (Streptococcus pyogenes serotype M18 (strain MGAS8232)).